A 90-amino-acid polypeptide reads, in one-letter code: Co-chaperonin GroES (90 aa).

This sequence belongs to the GroES chaperonin family. In terms of assembly, heptamer of 7 subunits arranged in a ring. Interacts with the chaperonin GroEL.

The protein localises to the cytoplasm. In terms of biological role, together with the chaperonin GroEL, plays an essential role in assisting protein folding. The GroEL-GroES system forms a nano-cage that allows encapsulation of the non-native substrate proteins and provides a physical environment optimized to promote and accelerate protein folding. GroES binds to the apical surface of the GroEL ring, thereby capping the opening of the GroEL channel. In Fusobacterium nucleatum subsp. polymorphum (Fusobacterium polymorphum), this protein is Co-chaperonin GroES.